Consider the following 180-residue polypeptide: MSDPLPSSFEDNPQFEEETGLQKFRRRLKEEPLIPLGCAATCYALYRAYRSMKAGDSVEMNRMFRARIYAQAFTLVAVVAGGMYFKTERQQRREFEKAVEERKSQEKRDAWLRELEIRDQEDRGWRERHAAMEAAANEAAKKAAVKPTAEQDAARSVIEAADQKSLGVLDAVMELMSRQK.

The 92-residue stretch at 5-96 folds into the HIG1 domain; that stretch reads LPSSFEDNPQ…TERQQRREFE (92 aa). 2 helical membrane passes run 32–48 and 68–85; these read PLIP…LYRA and IYAQ…GMYF. Positions 88–108 form a coiled coil; sequence ERQQRREFEKAVEERKSQEKR.

Belongs to the RCF1 family. Associates with the respiratory chain complex III/complex IV supercomplex.

Its subcellular location is the mitochondrion membrane. In terms of biological role, cytochrome c oxidase subunit which plays a role in assembly of respiratory supercomplexes. The protein is Respiratory supercomplex factor 1, mitochondrial (rcf1) of Aspergillus terreus (strain NIH 2624 / FGSC A1156).